Consider the following 239-residue polypeptide: Transmembrane emp24 domain-containing protein 6 (239 aa).

The signal sequence occupies residues 1–21 (MFPLLLVAELVVLSLVTSVKS). At 22–200 (QETDPLHGSK…FFLLQSNYTY (179 aa)) the chain is on the lumenal side. In terms of domain architecture, GOLD spans 53 to 138 (IECFWQFADQ…SIQVYLNFGV (86 aa)). N-linked (GlcNAc...) asparagine glycans are attached at residues asparagine 156 and asparagine 197. A helical transmembrane segment spans residues 201–223 (VNWWSTAQSLAIVLSGALQLYFL). Residues 224-239 (KRLFTASTTDTKKPRC) are Cytoplasmic-facing.

The protein belongs to the EMP24/GP25L family.

The protein localises to the endoplasmic reticulum membrane. In Mus musculus (Mouse), this protein is Transmembrane emp24 domain-containing protein 6 (Tmed6).